The primary structure comprises 124 residues: Ribosome-binding factor A (124 aa).

It belongs to the RbfA family. As to quaternary structure, monomer. Binds 30S ribosomal subunits, but not 50S ribosomal subunits or 70S ribosomes.

The protein resides in the cytoplasm. One of several proteins that assist in the late maturation steps of the functional core of the 30S ribosomal subunit. Associates with free 30S ribosomal subunits (but not with 30S subunits that are part of 70S ribosomes or polysomes). Required for efficient processing of 16S rRNA. May interact with the 5'-terminal helix region of 16S rRNA. This is Ribosome-binding factor A from Sorangium cellulosum (strain So ce56) (Polyangium cellulosum (strain So ce56)).